The following is a 55-amino-acid chain: Large ribosomal subunit protein bL33 (55 aa).

Belongs to the bacterial ribosomal protein bL33 family.

This is Large ribosomal subunit protein bL33 from Baumannia cicadellinicola subsp. Homalodisca coagulata.